Here is a 1525-residue protein sequence, read N- to C-terminus: Autophagy-related protein 2 (1525 aa).

Disordered stretches follow at residues 216-247 (RGTSAPVTAGSTAHATTGFTSESDSDSDTDPF) and 712-738 (AELQESSSPDSSSRESSSGSESPPKRI). Residues 220-230 (APVTAGSTAHA) are compositionally biased toward polar residues. Residues 716 to 733 (ESSSPDSSSRESSSGSES) are compositionally biased toward low complexity.

It belongs to the ATG2 family.

The protein localises to the preautophagosomal structure membrane. Its subcellular location is the endoplasmic reticulum membrane. It carries out the reaction a 1,2-diacyl-sn-glycero-3-phosphocholine(in) = a 1,2-diacyl-sn-glycero-3-phosphocholine(out). It catalyses the reaction a 1,2-diacyl-sn-glycero-3-phospho-L-serine(in) = a 1,2-diacyl-sn-glycero-3-phospho-L-serine(out). The catalysed reaction is a 1,2-diacyl-sn-glycero-3-phosphoethanolamine(in) = a 1,2-diacyl-sn-glycero-3-phosphoethanolamine(out). Its function is as follows. Lipid transfer protein required for autophagosome completion and peroxisome degradation. Tethers the edge of the isolation membrane (IM) to the endoplasmic reticulum (ER) and mediates direct lipid transfer from ER to IM for IM expansion. ATG2 binds to the ER exit site (ERES), which is the membrane source for autophagosome formation, using basic residues in its N-terminal region (NR) and to the expanding edge of the IM through its C-terminal region. The latter binding is assisted by an ATG18-PtdIns3P interaction. ATG2 then extracts phospholipids from the membrane source using its NR and transfers them to ATG9 to the IM through its predicted beta-sheet-rich structure for membrane expansion. The sequence is that of Autophagy-related protein 2 (ATG2) from Yarrowia lipolytica (strain CLIB 122 / E 150) (Yeast).